Here is a 141-residue protein sequence, read N- to C-terminus: MPNQNLIALGFDFGMKRIGVAVGQTVTHSANAIAILKAQDGVPDWEKIKMLIETWHANVLVVGIPYNMDGSEQTLTFAARKFARKLQTRFGLPVSMVDERLTTIEAKRQWYEQGLTKRPQHLDNYAAKLILEQWLQEQKNE.

This sequence belongs to the YqgF nuclease family.

The protein localises to the cytoplasm. Could be a nuclease involved in processing of the 5'-end of pre-16S rRNA. The protein is Putative pre-16S rRNA nuclease of Coxiella burnetii (strain CbuG_Q212) (Coxiella burnetii (strain Q212)).